Consider the following 573-residue polypeptide: Probable D-xylulose kinase A (573 aa).

The substrate site is built by His-100, Arg-171, Asp-287, and Asn-288. ATP contacts are provided by residues Trp-368, 473 to 474, and Asn-477; that span reads GG.

Belongs to the FGGY kinase family.

It is found in the cytoplasm. The enzyme catalyses D-xylulose + ATP = D-xylulose 5-phosphate + ADP + H(+). Functionally, highly specific D-xylulose kinase which participates in the catabolism of xylose. Xylose is a major component of hemicelluloses such as xylan. Most fungi utilize D-xylose via three enzymatic reactions, xylose reductase (XR), xylitol dehydrogenase (XDH), and xylulokinase, to form xylulose 5-phosphate, which enters pentose phosphate pathway. The sequence is that of Probable D-xylulose kinase A (xkiA) from Aspergillus terreus (strain NIH 2624 / FGSC A1156).